The sequence spans 188 residues: Putative manganese efflux pump MntP (188 aa).

Helical transmembrane passes span 2–22 (LYIE…AVSV), 40–60 (IASV…TMGL), 66–86 (ICAF…GKMI), 107–127 (LCGL…SLAI), 133–153 (LLQA…GVYF), and 167–187 (LIGG…HLFF).

It belongs to the MntP (TC 9.B.29) family.

Its subcellular location is the cell inner membrane. Probably functions as a manganese efflux pump. In Parabacteroides distasonis (strain ATCC 8503 / DSM 20701 / CIP 104284 / JCM 5825 / NCTC 11152), this protein is Putative manganese efflux pump MntP.